The following is a 344-amino-acid chain: Phosphoribosylformylglycinamidine cyclo-ligase (344 aa).

The protein belongs to the AIR synthase family.

It localises to the cytoplasm. The enzyme catalyses 2-formamido-N(1)-(5-O-phospho-beta-D-ribosyl)acetamidine + ATP = 5-amino-1-(5-phospho-beta-D-ribosyl)imidazole + ADP + phosphate + H(+). The protein operates within purine metabolism; IMP biosynthesis via de novo pathway; 5-amino-1-(5-phospho-D-ribosyl)imidazole from N(2)-formyl-N(1)-(5-phospho-D-ribosyl)glycinamide: step 2/2. The protein is Phosphoribosylformylglycinamidine cyclo-ligase of Bifidobacterium animalis subsp. lactis (strain AD011).